Consider the following 492-residue polypeptide: Differentially expressed in FDCP 8 homolog (492 aa).

Residues 38–51 (GLGGSGSTGSGSEA) show a composition bias toward gly residues. The interval 38-62 (GLGGSGSTGSGSEAGGSEESGPQGA) is disordered. 2 consecutive Phorbol-ester/DAG-type zinc fingers follow at residues 161–214 (PHHG…KRVC) and 400–453 (DHIR…NMIC). A disordered region spans residues 468–492 (RMKSTEDDDDDDDGVATDDDVTAAE). The span at 473 to 492 (EDDDDDDDGVATDDDVTAAE) shows a compositional bias: acidic residues.

The protein belongs to the DEF8 family.

In Drosophila melanogaster (Fruit fly), this protein is Differentially expressed in FDCP 8 homolog.